A 121-amino-acid chain; its full sequence is MAKITKEQFIESLKEMTIKEVMEFVDALKEEFGVDPSAVAVAATPVATEEVKTEVKLTLKAAGQQKVAVIKVVKDLLGLSLMDAKKLVDAAPSVLKEAIKPEEAEEYKAKLVAAGAEVSID.

It belongs to the bacterial ribosomal protein bL12 family. Homodimer. Part of the ribosomal stalk of the 50S ribosomal subunit. Forms a multimeric L10(L12)X complex, where L10 forms an elongated spine to which 2 to 4 L12 dimers bind in a sequential fashion. Binds GTP-bound translation factors.

Functionally, forms part of the ribosomal stalk which helps the ribosome interact with GTP-bound translation factors. Is thus essential for accurate translation. This is Large ribosomal subunit protein bL12 from Mesomycoplasma hyopneumoniae (strain 232) (Mycoplasma hyopneumoniae).